The following is a 109-amino-acid chain: Parvalbumin beta (109 aa).

Ser1 is modified (N-acetylserine). 2 EF-hand domains span residues 38–73 and 77–109; these read KTPDVIKKAFYVIDQDKSGFIEEDELKLFLQNFASS and LTDKETETFLKAGDSDGDGKIGIDEFADLVKEA. Residues Asp51, Asp53, Ser55, Phe57, Glu59, Glu62, Asp90, Asp92, Asp94, Lys96, and Glu101 each contribute to the Ca(2+) site.

This sequence belongs to the parvalbumin family.

In terms of biological role, in muscle, parvalbumin is thought to be involved in relaxation after contraction. It binds two calcium ions. The chain is Parvalbumin beta from Opsanus tau (Oyster toadfish).